The chain runs to 193 residues: Superoxide dismutase [Fe] (193 aa).

Fe cation is bound by residues H27, H74, D157, and H161.

Belongs to the iron/manganese superoxide dismutase family. Homodimer. The cofactor is Fe cation.

It catalyses the reaction 2 superoxide + 2 H(+) = H2O2 + O2. In terms of biological role, destroys superoxide anion radicals which are normally produced within the cells and which are toxic to biological systems. The protein is Superoxide dismutase [Fe] (sodB) of Coxiella burnetii (strain RSA 493 / Nine Mile phase I).